The chain runs to 871 residues: Coatomer subunit gamma-2 (871 aa).

Over residues 1–11 (MIKKFDKKDEE) the composition is skewed to basic and acidic residues. The disordered stretch occupies residues 1–21 (MIKKFDKKDEESGSGSNPFQH). 6 HEAT repeats span residues 64–101 (TEAT…ISED), 283–320 (RELA…KHPS), 321–355 (AVTA…GSES), 356–392 (SVDR…KYPR), 395–430 (SVMM…ENPE), and 467–504 (PVPS…QNES). A Phosphothreonine modification is found at T594.

The protein belongs to the COPG family. As to quaternary structure, oligomeric complex. Binds to CDC42. Interacts with JAGN1. Interacts with TMED10 (via cytoplasmic domain).

Its subcellular location is the cytoplasm. It localises to the cytosol. The protein resides in the golgi apparatus membrane. It is found in the cytoplasmic vesicle. The protein localises to the COPI-coated vesicle membrane. In terms of biological role, the coatomer is a cytosolic protein complex that binds to dilysine motifs and reversibly associates with Golgi non-clathrin-coated vesicles, which further mediate biosynthetic protein transport from the ER, via the Golgi up to the trans Golgi network. Coatomer complex is required for budding from Golgi membranes, and is essential for the retrograde Golgi-to-ER transport of dilysine-tagged proteins. In mammals, the coatomer can only be recruited by membranes associated to ADP-ribosylation factors (ARFs), which are small GTP-binding proteins; the complex also influences the Golgi structural integrity, as well as the processing, activity, and endocytic recycling of LDL receptors. The polypeptide is Coatomer subunit gamma-2 (COPG2) (Homo sapiens (Human)).